A 213-amino-acid polypeptide reads, in one-letter code: Pyridoxine/pyridoxamine 5'-phosphate oxidase (213 aa).

Residues 8 to 11 (RQEY) and Lys-66 each bind substrate. FMN contacts are provided by residues 61 to 66 (RTVLLK), 76 to 77 (YT), Arg-82, Lys-83, and Gln-105. Residues Tyr-123, Arg-127, and Ser-131 each coordinate substrate. Residues 140 to 141 (QS) and Trp-185 contribute to the FMN site. 191-193 (RLH) contributes to the substrate binding site. Arg-195 contacts FMN.

It belongs to the pyridoxamine 5'-phosphate oxidase family. As to quaternary structure, homodimer. The cofactor is FMN.

It catalyses the reaction pyridoxamine 5'-phosphate + O2 + H2O = pyridoxal 5'-phosphate + H2O2 + NH4(+). It carries out the reaction pyridoxine 5'-phosphate + O2 = pyridoxal 5'-phosphate + H2O2. It participates in cofactor metabolism; pyridoxal 5'-phosphate salvage; pyridoxal 5'-phosphate from pyridoxamine 5'-phosphate: step 1/1. It functions in the pathway cofactor metabolism; pyridoxal 5'-phosphate salvage; pyridoxal 5'-phosphate from pyridoxine 5'-phosphate: step 1/1. Its function is as follows. Catalyzes the oxidation of either pyridoxine 5'-phosphate (PNP) or pyridoxamine 5'-phosphate (PMP) into pyridoxal 5'-phosphate (PLP). The polypeptide is Pyridoxine/pyridoxamine 5'-phosphate oxidase (Bacteroides thetaiotaomicron (strain ATCC 29148 / DSM 2079 / JCM 5827 / CCUG 10774 / NCTC 10582 / VPI-5482 / E50)).